Reading from the N-terminus, the 230-residue chain is Dephospho-CoA kinase (230 aa).

In terms of domain architecture, DPCK spans 3–225; it reads IIGLTGGIAT…REGGAICPTP (223 aa). 11–16 provides a ligand contact to ATP; sequence ATGKST.

Belongs to the CoaE family.

Its subcellular location is the cytoplasm. It carries out the reaction 3'-dephospho-CoA + ATP = ADP + CoA + H(+). It participates in cofactor biosynthesis; coenzyme A biosynthesis; CoA from (R)-pantothenate: step 5/5. Catalyzes the phosphorylation of the 3'-hydroxyl group of dephosphocoenzyme A to form coenzyme A. The polypeptide is Dephospho-CoA kinase (Synechococcus sp. (strain JA-3-3Ab) (Cyanobacteria bacterium Yellowstone A-Prime)).